The following is a 530-amino-acid chain: UDP-glucuronosyltransferase 2B15 (530 aa).

The first 23 residues, 1-23, serve as a signal peptide directing secretion; sequence MSLKWTSVFLLIQLSCYFSSGSC. The N-linked (GlcNAc...) asparagine glycan is linked to Asn-65. Lys-136 is modified (N6-succinyllysine). N-linked (GlcNAc...) asparagine glycosylation is found at Asn-316 and Asn-483. The helical transmembrane segment at 495 to 515 threads the bilayer; that stretch reads IAFLLACVATVIFIITKFCLF.

It belongs to the UDP-glycosyltransferase family. In terms of tissue distribution, expressed in many tissues. Present in liver, prostate and testis.

The protein localises to the endoplasmic reticulum membrane. It catalyses the reaction glucuronate acceptor + UDP-alpha-D-glucuronate = acceptor beta-D-glucuronoside + UDP + H(+). The enzyme catalyses 17alpha-estradiol + UDP-alpha-D-glucuronate = 17alpha-estradiol 3-O-(beta-D-glucuronate) + UDP + H(+). The catalysed reaction is 16alpha,17alpha-estriol + UDP-alpha-D-glucuronate = 16alpha,17alpha-estriol 3-O-(beta-D-glucuronate) + UDP + H(+). It carries out the reaction 17beta-hydroxy-5alpha-androstan-3-one + UDP-alpha-D-glucuronate = 5alpha-dihydrotestosterone 17-O-(beta-D-glucuronate) + UDP + H(+). Functionally, UDP-glucuronosyltransferase (UGT) that catalyzes phase II biotransformation reactions in which lipophilic substrates are conjugated with glucuronic acid to increase the metabolite's water solubility, thereby facilitating excretion into either the urine or bile. Essential for the elimination and detoxification of drugs, xenobiotics and endogenous compounds. Catalyzes the glucuronidation of endogenous steroid hormones such as androgens (testosterone, androsterone) and estrogens (estradiol, epiestradiol, estriol, catechol estrogens). Displays glucuronidation activity toward several classes of xenobiotic substrates, including phenolic compounds (eugenol, 4-nitrophenol, 4-hydroxybiphenyl) and phenylpropanoids (naringenin, coumarins). Catalyzes the glucuronidation of monoterpenoid alcohols such as borneol, menthol and isomenthol, a class of natural compounds used in essential oils. This Homo sapiens (Human) protein is UDP-glucuronosyltransferase 2B15.